We begin with the raw amino-acid sequence, 606 residues long: MSDSKMDKLARMAPLPRTPLLTIWLAINMALIAQETGHKRIHTVQAATGGGSMLGDVNISAILDSFSVSYDKRVRPNYGGPPVEVGVTMYVLSISSLSEVKMDFTLDFYFRQFWTDPRLAYRKRPGVETLSVGSEFIKNIWVPDTFFVNEKQSYFHIATTSNEFIRVHHSGSITRSIRLTITASCPMNLQYFPMDRQLCHIEIESFGYTMRDIRYKWNEGPNSVGVSSEVSLPQFKVLGHRQRAMEISLTTGNYSRLACEIQFVRSMGYYLIQIYIPSGLIVIISWVSFWLNRNATPARVALGVTTVLTMTTLMSSTNAALPKISYVKSIDVYLGTCFVMVFASLLEYATVGYMAKRIQMRKQRFMAIQKIAEQKKQQLDGANQQQANPNPNANVGGPGGVGVGPGGPGGPGGGVNVGVGMGMGPEHGHGHGHHAHSHGHPHAPKQTVSNRPIGFSNIQQNVGTRGCSIVGPLFQEVRFKVHDPKAHSKGGTLENTVNGGRGGPQSHGPGPGQGGGPPGGGGGGGGGGGPPEGGGDPEAAVPAHLLHPGKVKKDINKLLGITPSDIDKYSRIVFPVCFVCFNLMYWIIYLHVSDVVADDLVLLGEE.

An N-terminal signal peptide occupies residues methionine 1 to valine 44. The Extracellular portion of the chain corresponds to glutamine 45–glycine 268. An N-linked (GlcNAc...) asparagine glycan is attached at asparagine 58. Residues cysteine 185 and cysteine 199 are joined by a disulfide bond. N-linked (GlcNAc...) asparagine glycosylation occurs at asparagine 253. The next 3 helical transmembrane spans lie at tyrosine 269–leucine 291, proline 297–serine 316, and tyrosine 333–lysine 356. The Cytoplasmic segment spans residues arginine 357–lysine 568. Disordered stretches follow at residues lysine 376–arginine 451 and histidine 482–proline 542. Residues glycine 381 to valine 395 show a composition bias toward low complexity. The span at glycine 396–proline 425 shows a compositional bias: gly residues. Basic residues predominate over residues glycine 430 to alanine 443. A compositionally biased stretch (gly residues) spans glycine 499 to aspartate 536. Residues tyrosine 569–leucine 590 form a helical membrane-spanning segment.

The protein belongs to the ligand-gated ion channel (TC 1.A.9) family. Gamma-aminobutyric acid receptor (TC 1.A.9.5) subfamily. As to quaternary structure, forms oligomers. Interacts with Nlg4; the interaction mediates Rdl clustering. Interacts with Fbxl4; the interaction mediates Rdl degradation. In terms of tissue distribution, expressed in different parts of the brain: the mushroom bodies (alpha, alpha', beta, beta', gamma lobes and peduncles), the neurons projecting to the columnar-type neuron LC9 optic glomerulus, in interneurons connecting the paired olfactory lobes, antennal lobes, PDF-expressing small and large ventral lateral neurons (LNvs) of the circadian clock and lobula columnar neuron 11 (LC11) (at protein level). Expressed in all major ON pathway medulla neurons (Mi1, Tm3, Mi4, and Mi9) and in OFF pathway neurons (Tm1, Tm2, Tm4, and Tm9).

Its subcellular location is the cell membrane. The protein resides in the postsynaptic cell membrane. It is found in the cell projection. The protein localises to the dendrite. It localises to the axon. Activated by agonist muscimol. Insensitive to zinc, glycine, glutamate, and baclofen, loreclezole, to antagonist bicuculline, glycine-receptor antagonist strychnine, and nonselective GABA and glycine antagonist RU 5135. Insensitive to flunitrazepam, pentobarbitone or pregnane steroids such as 5alpha-pregnan-3alpha-ol-20-one. Inhibited by insecticides picrotoxin (PTX), cyclodiene dieldrin, TBPS and lindane. Inhibited by ivermectin, fipronil and pyrafluprole. With respect to regulation, inhibited by insecticides picrotoxin (PTX). In terms of biological role, gamma-aminobutyric acid (GABA) receptor voltage channel subunit. GABA, an inhibitory neurotransmitter, mediates neuronal inhibition by binding to the GABA receptor and opening an integral chloride channel. Together with glutamate receptor GluClalpha, plays an important role in the visual response by regulating the activity of ON/OFF-selective neurons. Plays a role in promoting sleep and sleep latency by regulating the activity of peptidergic PDF neurons. In large ventral lateral clock neurons, clustering is mediated by Nlg4 and protein levels undergo daily degradation in response to the circadian clock. In neurons in the mushroom bodies, has a role in odor memory acquisition where it inhibits appetitive and aversive olfactory learning, probably upstream of Adcy1/adenylate cyclase 1 and GTPase activating protein Nf1. In male-specific GABAergic neurons, plays a role in inhibiting male aggressive behavior during courtship. Its function is as follows. Gamma-aminobutyric acid (GABA) receptor voltage channel subunit. The chain is Gamma-aminobutyric acid receptor subunit beta (Rdl) from Drosophila melanogaster (Fruit fly).